Reading from the N-terminus, the 428-residue chain is Glutamate-1-semialdehyde 2,1-aminomutase (428 aa).

An N6-(pyridoxal phosphate)lysine modification is found at K267.

It belongs to the class-III pyridoxal-phosphate-dependent aminotransferase family. HemL subfamily. As to quaternary structure, homodimer. It depends on pyridoxal 5'-phosphate as a cofactor.

The protein resides in the cytoplasm. It catalyses the reaction (S)-4-amino-5-oxopentanoate = 5-aminolevulinate. It functions in the pathway porphyrin-containing compound metabolism; protoporphyrin-IX biosynthesis; 5-aminolevulinate from L-glutamyl-tRNA(Glu): step 2/2. The polypeptide is Glutamate-1-semialdehyde 2,1-aminomutase (Flavobacterium johnsoniae (strain ATCC 17061 / DSM 2064 / JCM 8514 / BCRC 14874 / CCUG 350202 / NBRC 14942 / NCIMB 11054 / UW101) (Cytophaga johnsonae)).